We begin with the raw amino-acid sequence, 355 residues long: Erythronate-4-phosphate dehydrogenase (355 aa).

Residues serine 45 and threonine 66 each contribute to the substrate site. NAD(+) is bound at residue aspartate 146. Arginine 206 is an active-site residue. Position 229 (aspartate 229) interacts with NAD(+). Residue glutamate 234 is part of the active site. The active-site Proton donor is the histidine 251. Glycine 254 is a binding site for NAD(+). Tyrosine 255 is a binding site for substrate.

Belongs to the D-isomer specific 2-hydroxyacid dehydrogenase family. PdxB subfamily. In terms of assembly, homodimer.

Its subcellular location is the cytoplasm. It carries out the reaction 4-phospho-D-erythronate + NAD(+) = (R)-3-hydroxy-2-oxo-4-phosphooxybutanoate + NADH + H(+). Its pathway is cofactor biosynthesis; pyridoxine 5'-phosphate biosynthesis; pyridoxine 5'-phosphate from D-erythrose 4-phosphate: step 2/5. Functionally, catalyzes the oxidation of erythronate-4-phosphate to 3-hydroxy-2-oxo-4-phosphonooxybutanoate. In Acinetobacter baumannii (strain ATCC 17978 / DSM 105126 / CIP 53.77 / LMG 1025 / NCDC KC755 / 5377), this protein is Erythronate-4-phosphate dehydrogenase.